The sequence spans 192 residues: tRNA (cytidine(56)-2'-O)-methyltransferase (192 aa).

S-adenosyl-L-methionine contacts are provided by residues leucine 84 and 112-116 (GGEKV).

The protein belongs to the aTrm56 family. In terms of assembly, homodimer.

The protein localises to the cytoplasm. The catalysed reaction is cytidine(56) in tRNA + S-adenosyl-L-methionine = 2'-O-methylcytidine(56) in tRNA + S-adenosyl-L-homocysteine + H(+). Functionally, specifically catalyzes the AdoMet-dependent 2'-O-ribose methylation of cytidine at position 56 in tRNAs. The protein is tRNA (cytidine(56)-2'-O)-methyltransferase of Halobacterium salinarum (strain ATCC 700922 / JCM 11081 / NRC-1) (Halobacterium halobium).